Consider the following 1249-residue polypeptide: Fanconi anemia group J protein (1249 aa).

Residues 11–442 (GGVKIYFPYK…KDHEPLRAVC (432 aa)) form the Helicase ATP-binding domain. Residues 102 to 127 (QGTSRHFNYPSTPPSERNGTSSTCQD) show a composition bias toward polar residues. A disordered region spans residues 102 to 131 (QGTSRHFNYPSTPPSERNGTSSTCQDSPEK). Residues 158-175 (KKRIRPLETTQQIRKRHC) carry the Nuclear localization signal motif. 185-192 (AKVDSGKT) serves as a coordination point for ATP. Residues C283, C298, C310, and C350 each coordinate [4Fe-4S] cluster. The DEAH box motif lies at 393–396 (DEAH). 7 positions are modified to phosphoserine: S505, S927, S930, S956, S990, S1004, and S1032. The segment at 888–1063 (HQKVLNVSIK…ESSNLTVNTS (176 aa)) is interaction with BRCA1. Disordered stretches follow at residues 1018–1042 (KATPELGSSENSASSPPRFKTEKME) and 1108–1127 (VSEEDKQSTSNRDFETEAED). Over residues 1023 to 1032 (LGSSENSASS) the composition is skewed to polar residues. The segment covering 1110–1122 (EEDKQSTSNRDFE) has biased composition (basic and acidic residues). Position 1237 is a phosphoserine (S1237). K1249 is modified (N6-acetyllysine).

This sequence belongs to the DEAD box helicase family. DEAH subfamily. Interacts with the replication protein A complex (RPA) via the RPA1 subunit; following DNA damage they colocalize in foci in the nucleus. Binds directly to the BRCT domains of BRCA1. Interacts with the CIA complex components CIAO1, CIAO2B and MMS19. The cofactor is [4Fe-4S] cluster. Post-translationally, phosphorylated. Phosphorylation is necessary for interaction with BRCA1, and is cell-cycle regulated. Acetylation at Lys-1249 facilitates DNA end processing required for repair and checkpoint signaling. Ubiquitously expressed, with highest levels in testis.

It localises to the nucleus. The protein resides in the cytoplasm. It carries out the reaction Couples ATP hydrolysis with the unwinding of duplex DNA at the replication fork by translocating in the 5'-3' direction. This creates two antiparallel DNA single strands (ssDNA). The leading ssDNA polymer is the template for DNA polymerase III holoenzyme which synthesizes a continuous strand.. The enzyme catalyses ATP + H2O = ADP + phosphate + H(+). Its activity is regulated as follows. Helicase activity on forked substrates is stimulated by replication protein A complex heterotrimer (RPA1, RPA2, RPA3). Helicase activity on G-quadruplex DNA is stimulated 3-fold by RPA, and inhibited by MSH2/MSH6. Unwinding of G-quadruplex DNA is inhibited by ATP-gamma-S and telomestatin (TMS); TMA does not inhibit unwinding of forked-duplex DNA. Helicase activity on dsDNA and G-quadruplex DNA is inhibited by porphyrin derivatives meso-tetra (N-methyl-4-pyridyl) porphine tetra tosylate (T4) and N-methyl mesoporphyrin IX (NMM). DNA-dependent ATPase and 5'-3' DNA helicase required for the maintenance of chromosomal stability. Acts late in the Fanconi anemia pathway, after FANCD2 ubiquitination. Involved in the repair of DNA double-strand breaks by homologous recombination in a manner that depends on its association with BRCA1. Involved in the repair of abasic sites at replication forks by promoting the degradation of DNA-protein cross-links: acts by catalyzing unfolding of HMCES DNA-protein cross-link via its helicase activity, exposing the underlying DNA and enabling cleavage of the DNA-protein adduct by the SPRTN metalloprotease. Can unwind RNA:DNA substrates. Unwinds G-quadruplex DNA; unwinding requires a 5'-single stranded tail. This is Fanconi anemia group J protein from Homo sapiens (Human).